The following is a 692-amino-acid chain: 5-taurinomethyluridine-[tRNA] synthase subunit MTO1, mitochondrial (692 aa).

A mitochondrion-targeting transit peptide spans methionine 1–leucine 25. FAD is bound by residues glycine 43–glycine 48, valine 155, serine 218, and glutamine 407. Residue lysine 508 is modified to N6-methyllysine.

The protein belongs to the MnmG family. Homodimer; forms a dimer in the presence of potassium. Interacts with GTPBP3; forms the GTPBP3-MTO1 complex composed of homodimers of GTPBP3 and MTO1. It depends on FAD as a cofactor.

Its subcellular location is the mitochondrion. The enzyme catalyses 5,10-methylenetetrahydrofolate + uridine(34) in tRNA + taurine + GTP + A + H2O = 5-taurinomethyluridine(34) in tRNA + 7,8-dihydrofolate + GDP + AH2 + phosphate + H(+). In terms of biological role, component of the GTPBP3-MTO1 complex that catalyzes the 5-taurinomethyluridine (taum(5)U) modification at the 34th wobble position (U34) of mitochondrial tRNAs (mt-tRNAs), which plays a role in mt-tRNA decoding and mitochondrial translation. Taum(5)U formation on mammalian mt-tRNA requires the presence of both GTPBP3-mediated GTPase activity and MTO1 catalytic activity. The chain is 5-taurinomethyluridine-[tRNA] synthase subunit MTO1, mitochondrial (MTO1) from Pongo abelii (Sumatran orangutan).